A 284-amino-acid chain; its full sequence is Putative mitochondrial carrier protein PET8 (284 aa).

Solcar repeat units lie at residues 2–75, 92–178, and 192–271; these read NTFF…MKVK, IDTT…LKKT, and KGAI…VHSL. 6 helical membrane-spanning segments follow: residues 5–25, 50–70, 98–118, 153–169, 194–214, and 252–272; these read FLSL…FFPI, GLGS…ISYD, MLSS…AEVV, GWST…CIQF, AICG…LDFL, and MWIS…HSLL.

This sequence belongs to the mitochondrial carrier (TC 2.A.29) family.

It is found in the mitochondrion inner membrane. In Saccharomyces cerevisiae (strain ATCC 204508 / S288c) (Baker's yeast), this protein is Putative mitochondrial carrier protein PET8 (PET8).